Consider the following 213-residue polypeptide: Small ribosomal subunit protein uS5 (213 aa).

The tract at residues 1–42 (MSERDRNGGRSADNNRNDRNERGGRNDRGGRNDRRNNQQDER) is disordered. The S5 DRBM domain occupies 45–108 (YIERVVTINR…EEARKNFFRV (64 aa)).

The protein belongs to the universal ribosomal protein uS5 family. In terms of assembly, part of the 30S ribosomal subunit. Contacts proteins S4 and S8.

Its function is as follows. With S4 and S12 plays an important role in translational accuracy. Located at the back of the 30S subunit body where it stabilizes the conformation of the head with respect to the body. This chain is Small ribosomal subunit protein uS5, found in Corynebacterium urealyticum (strain ATCC 43042 / DSM 7109).